Consider the following 173-residue polypeptide: Alpha-crystallin A chain (173 aa).

N-acetylmethionine is present on methionine 1. Residues 1–63 (MDVTIQHPWF…RTVLDSGISE (63 aa)) are required for complex formation with BFSP1 and BFSP2. Glutamine 6 carries the deamidated glutamine; partial modification. Residue serine 45 is modified to Phosphoserine. Glutamine 50 bears the Deamidated glutamine; partial mark. A sHSP domain is found at 52–162 (LFRTVLDSGI…GPSERAIPVS (111 aa)). Residues lysine 70 and lysine 99 each carry the N6-acetyllysine modification. Residues histidine 100, glutamate 102, and histidine 107 each coordinate Zn(2+). The tract at residues 145–173 (KVASGLDAGPSERAIPVSREEKPSSAPSS) is disordered. Serine 162 carries O-linked (GlcNAc) serine glycosylation.

It belongs to the small heat shock protein (HSP20) family. In terms of assembly, heteromer composed of three CRYAA and one CRYAB subunits. Zinc coordination is achieved at least by His-100, Glu-102 and His-107. His-100 and Glu-102 come from the same molecule within the oligomer, while His-107 residue is provided by another molecule. Inter-subunit bridging via zinc ions enhances stability, which is crucial as there is no protein turn over in the lens. Can also form homodimers and homotetramers (dimers of dimers) which serve as the building blocks of homooligomers. Part of a complex required for lens intermediate filament formation composed of BFSP1, BFSP2 and CRYAA. Post-translationally, acetylation at Lys-70 may increase chaperone activity. In terms of processing, undergoes age-dependent proteolytical cleavage at the C-terminus.

It is found in the cytoplasm. It localises to the nucleus. Contributes to the transparency and refractive index of the lens. Acts as a chaperone, preventing aggregation of various proteins under a wide range of stress conditions. Required for the correct formation of lens intermediate filaments as part of a complex composed of BFSP1, BFSP2 and CRYAA. This chain is Alpha-crystallin A chain (CRYAA), found in Erinaceus europaeus (Western European hedgehog).